The primary structure comprises 611 residues: Dihydroxy-acid dehydratase (611 aa).

Residue aspartate 81 coordinates Mg(2+). Residue cysteine 122 participates in [2Fe-2S] cluster binding. Residues aspartate 123 and lysine 124 each coordinate Mg(2+). N6-carboxylysine is present on lysine 124. Cysteine 195 lines the [2Fe-2S] cluster pocket. Position 491 (glutamate 491) interacts with Mg(2+). The active-site Proton acceptor is serine 517.

Belongs to the IlvD/Edd family. As to quaternary structure, homodimer. [2Fe-2S] cluster serves as cofactor. The cofactor is Mg(2+).

It carries out the reaction (2R)-2,3-dihydroxy-3-methylbutanoate = 3-methyl-2-oxobutanoate + H2O. It catalyses the reaction (2R,3R)-2,3-dihydroxy-3-methylpentanoate = (S)-3-methyl-2-oxopentanoate + H2O. It participates in amino-acid biosynthesis; L-isoleucine biosynthesis; L-isoleucine from 2-oxobutanoate: step 3/4. The protein operates within amino-acid biosynthesis; L-valine biosynthesis; L-valine from pyruvate: step 3/4. In terms of biological role, functions in the biosynthesis of branched-chain amino acids. Catalyzes the dehydration of (2R,3R)-2,3-dihydroxy-3-methylpentanoate (2,3-dihydroxy-3-methylvalerate) into 2-oxo-3-methylpentanoate (2-oxo-3-methylvalerate) and of (2R)-2,3-dihydroxy-3-methylbutanoate (2,3-dihydroxyisovalerate) into 2-oxo-3-methylbutanoate (2-oxoisovalerate), the penultimate precursor to L-isoleucine and L-valine, respectively. This Brucella abortus (strain S19) protein is Dihydroxy-acid dehydratase.